Reading from the N-terminus, the 569-residue chain is Hexose transporter HXT8 (569 aa).

Positions 1 to 38 (MTDRKTNLPEEPIFEEAEDDGCPSIENSSHLSVPTVEE) are disordered. The Cytoplasmic portion of the chain corresponds to 1–61 (MTDRKTNLPE…EVVVPEKPAS (61 aa)). Over residues 12–21 (PIFEEAEDDG) the composition is skewed to acidic residues. A helical transmembrane segment spans residues 62-82 (AYATVSIMCLCMAFGGFMSGW). Over 83-118 (DTGTISGFVNQTDFLRRFGNYSHSKNTYYLSNVRTG) the chain is Extracellular. N-linked (GlcNAc...) asparagine glycans are attached at residues Asn92 and Asn102. A helical membrane pass occupies residues 119-139 (LIVSIFNVGSAIGCLFLSKLG). Over 140 to 145 (DIYGRC) the chain is Cytoplasmic. Residues 146-166 (MGLIIVIVVYMVGIVIQIASI) traverse the membrane as a helical segment. Topologically, residues 167–176 (DKWYQYFIGR) are extracellular. A helical transmembrane segment spans residues 177–197 (IIAGIGAGSISVLAPMLISET). The Cytoplasmic segment spans residues 198 to 203 (APKHIR). A helical membrane pass occupies residues 204–224 (GTLLACWQLMVTFAIFLGYCT). The Extracellular portion of the chain corresponds to 225–238 (NYGTKTYSNSVQWR). Residues 239-259 (VPLGLCFAWAIIMIGGMTFVP) traverse the membrane as a helical segment. The Cytoplasmic portion of the chain corresponds to 260-342 (ESPRFLVQVG…INSLQQLTGD (83 aa)). Residues 343-359 (NYFFYYGTTIFKSVGMN) form a helical membrane-spanning segment. Residues 360–365 (DSFETS) are Extracellular-facing. The chain crosses the membrane as a helical span at residues 366–383 (IVLGIVNFASCFFSLYSV). Topologically, residues 384–390 (DKLGRRR) are cytoplasmic. The helical transmembrane segment at 391–411 (CLLLGAATMTACMVIYASVGV) threads the bilayer. Over 412-433 (TRLYPNGKSEPSSKGAGNCTIV) the chain is Extracellular. The N-linked (GlcNAc...) asparagine glycan is linked to Asn429. A helical membrane pass occupies residues 434 to 454 (FTCFYIFCFSCTWGPVCYVII). Topologically, residues 455–471 (SETFPLRVRSKCMSVAT) are cytoplasmic. Residues 472-492 (AANLLWGFLIGFFTPFITSAI) form a helical membrane-spanning segment. Asn493 is a topological domain (extracellular). Residues 494 to 514 (FYYGYVFMGCLAFSYFYVFFF) traverse the membrane as a helical segment. At 515 to 569 (VPETKGLTLEEVDEMWMDGVLPWKSESWVPASRRDGDYDNEKLQHDEKPFYKRMF) the chain is on the cytoplasmic side.

The protein belongs to the major facilitator superfamily. Sugar transporter (TC 2.A.1.1) family.

The protein resides in the membrane. Functionally, probable glucose transporter. The chain is Hexose transporter HXT8 (HXT8) from Saccharomyces cerevisiae (strain ATCC 204508 / S288c) (Baker's yeast).